The primary structure comprises 338 residues: Anthranilate phosphoribosyltransferase (338 aa).

5-phospho-alpha-D-ribose 1-diphosphate-binding positions include Gly81, 84-85 (GD), Thr89, 91-94 (NIST), 109-117 (KHGNRNLSS), and Ala121. Position 81 (Gly81) interacts with anthranilate. Ser93 contacts Mg(2+). Asn112 contacts anthranilate. Residue Arg167 coordinates anthranilate. 2 residues coordinate Mg(2+): Asp226 and Glu227.

Belongs to the anthranilate phosphoribosyltransferase family. Homodimer. Mg(2+) is required as a cofactor.

It carries out the reaction N-(5-phospho-beta-D-ribosyl)anthranilate + diphosphate = 5-phospho-alpha-D-ribose 1-diphosphate + anthranilate. It participates in amino-acid biosynthesis; L-tryptophan biosynthesis; L-tryptophan from chorismate: step 2/5. Catalyzes the transfer of the phosphoribosyl group of 5-phosphorylribose-1-pyrophosphate (PRPP) to anthranilate to yield N-(5'-phosphoribosyl)-anthranilate (PRA). This Cereibacter sphaeroides (strain KD131 / KCTC 12085) (Rhodobacter sphaeroides) protein is Anthranilate phosphoribosyltransferase.